A 371-amino-acid chain; its full sequence is Vasopressin V2 receptor (371 aa).

Over 1–38 the chain is Extracellular; that stretch reads MLLVSTVSAVPGLFSPPSSPSNSSQEELLDDRDPLLVR. Asn22 carries an N-linked (GlcNAc...) asparagine glycan. The helical transmembrane segment at 39–63 threads the bilayer; that stretch reads AELALLSTIFVAVALSNGLVLGALI. The Cytoplasmic segment spans residues 64–77; the sequence is RRGRRGRWAPMHVF. A helical transmembrane segment spans residues 78 to 98; the sequence is ISHLCLADLAVALFQVLPQLA. Residues 99-113 are Extracellular-facing; it reads WDATDRFHGPDALCR. Residues 114 to 135 form a helical membrane-spanning segment; it reads AVKYLQMVGMYASSYMILAMTL. Over 136-159 the chain is Cytoplasmic; that stretch reads DRHRAICRPMLAYRHGGGARWNRP. Residues 160-180 traverse the membrane as a helical segment; sequence VLVAWAFSLLLSLPQLFIFAQ. The Extracellular segment spans residues 181–200; that stretch reads RDVGNGSGVFDCWARFAEPW. An N-linked (GlcNAc...) asparagine glycan is attached at Asn185. The helical transmembrane segment at 201 to 220 threads the bilayer; that stretch reads GLRAYVTWIALMVFVAPALG. The Cytoplasmic segment spans residues 221–271; sequence IAACQVLIFREIHASLVPGPSERAGRRRRGRRTGSPSEGAHVSAAMAKTVR. Positions 240 to 260 are disordered; sequence PSERAGRRRRGRRTGSPSEGA. Residues 272-293 form a helical membrane-spanning segment; sequence MTLVIVIVYVLCWAPFFLVQLW. Topologically, residues 294–308 are extracellular; sequence AAWDPEAPLERPPFV. A helical membrane pass occupies residues 309-328; that stretch reads LLMLLASLNSCTNPWIYASF. The Cytoplasmic segment spans residues 329-371; it reads SSSVSSELRSLLCCAQRHTTHSLGPQDESCATASSSLMKDTPS. S-palmitoyl cysteine attachment occurs at residues Cys341 and Cys342. A disordered region spans residues 349–371; it reads HSLGPQDESCATASSSLMKDTPS. Positions 357 to 371 are enriched in polar residues; it reads SCATASSSLMKDTPS.

Belongs to the G-protein coupled receptor 1 family. Vasopressin/oxytocin receptor subfamily. In terms of assembly, interacts with ARRDC4. Identified in a complex containing at least ARRDC4, V2R and HGS. Interacts with TMEM147. In terms of tissue distribution, kidney.

The protein resides in the cell membrane. Its function is as follows. Receptor for arginine vasopressin. The activity of this receptor is mediated by G proteins which activate adenylate cyclase. Involved in renal water reabsorption. This Rattus norvegicus (Rat) protein is Vasopressin V2 receptor (Avpr2).